Reading from the N-terminus, the 131-residue chain is 1,4-dihydroxy-2-naphthoyl-CoA hydrolase (131 aa).

Asp7 is a catalytic residue.

Belongs to the 4-hydroxybenzoyl-CoA thioesterase family. DHNA-CoA hydrolase subfamily.

It carries out the reaction 1,4-dihydroxy-2-naphthoyl-CoA + H2O = 1,4-dihydroxy-2-naphthoate + CoA + H(+). It functions in the pathway cofactor biosynthesis; phylloquinone biosynthesis. It participates in quinol/quinone metabolism; 1,4-dihydroxy-2-naphthoate biosynthesis; 1,4-dihydroxy-2-naphthoate from chorismate: step 7/7. Catalyzes the hydrolysis of 1,4-dihydroxy-2-naphthoyl-CoA (DHNA-CoA) to 1,4-dihydroxy-2-naphthoate (DHNA), a reaction involved in phylloquinone (vitamin K1) biosynthesis. This is 1,4-dihydroxy-2-naphthoyl-CoA hydrolase from Synechococcus sp. (strain RCC307).